We begin with the raw amino-acid sequence, 1154 residues long: Coiled-coil domain-containing protein 136 (1154 aa).

Residues M1–H48 form a disordered region. Positions Y14 to E32 are enriched in acidic residues. Position 52 is a phosphoserine (S52). Coiled coils occupy residues Q696–Q733 and K859–V974. Positions D1031 to C1058 are enriched in basic and acidic residues. A disordered region spans residues D1031–F1131. Residues D1077–E1109 are compositionally biased toward acidic residues. The chain crosses the membrane as a helical span at residues I1130–A1150.

As to expression, expressed in gastric tissues. Down-regulated in gastric cancer.

The protein localises to the cytoplasmic vesicle. It localises to the secretory vesicle. It is found in the acrosome membrane. May play a role in acrosome formation in spermatogenesis and in fertilization. This is Coiled-coil domain-containing protein 136 (CCDC136) from Homo sapiens (Human).